A 1128-amino-acid polypeptide reads, in one-letter code: Glutamate receptor-interacting protein 1 (1128 aa).

S43 carries the post-translational modification Phosphoserine. 6 PDZ domains span residues 53-136 (VVEL…EYEL), 150-238 (TVEV…EYDV), 252-336 (LVEV…LPHH), 472-561 (EVVL…EFDV), 573-658 (HVKL…RKDE), and 673-755 (TVEL…KKQT). Disordered regions lie at residues 754-798 (QTDA…YPST) and 935-981 (MSLN…GRKS). Positions 944 to 974 (PRSQLGRQASFQERSSSRPHYSQTTRSNTLP) are enriched in polar residues. Positions 1004–1086 (KVTLYKDSDM…KLDLVISRNP (83 aa)) constitute a PDZ 7 domain. A compositionally biased stretch (polar residues) spans 1093 to 1115 (IDQQSLPGDWSEQNSAFFQQPSH). The segment at 1093-1128 (IDQQSLPGDWSEQNSAFFQQPSHGGNLETREPTNTL) is disordered.

As to quaternary structure, interacts with EPHA7, EPHB2, KIF5A, KIF5B, KIF5C, GRIA2, GRIA3, GRIPAP1/GRASP1, PPFIA1, PPFIA4, FRAS1, PLCD4, PTPRF and liprins-alpha. Can form homomultimers or heteromultimers with GRIP2. Forms a ternary complex with GRIA2 and CSPG4. Interacts with ATAD1 in an ATP-dependent manner. ATAD1-catalyzed ATP hydrolysis disrupts binding to ATAD1 and to GRIA2 and leads to AMPAR complex disassembly. Interacts with EFNB1, EFNB3 and the C-terminal tail of PRLHR. Interacts with SLC30A9. Interacts with BUD23. Forms a complex with NSG1, GRIA2 and STX12; controls the intracellular fate of AMPAR and the endosomal sorting of the GRIA2 subunit toward recycling and membrane targeting. Interacts with NSG1.

Its subcellular location is the cytoplasmic vesicle. The protein localises to the perikaryon. It localises to the cell projection. The protein resides in the dendrite. It is found in the cytoplasm. Its subcellular location is the endomembrane system. The protein localises to the postsynaptic cell membrane. It localises to the postsynaptic density. The protein resides in the endoplasmic reticulum membrane. Its function is as follows. May play a role as a localized scaffold for the assembly of a multiprotein signaling complex and as mediator of the trafficking of its binding partners at specific subcellular location in neurons. Through complex formation with NSG1, GRIA2 and STX12 controls the intracellular fate of AMPAR and the endosomal sorting of the GRIA2 subunit toward recycling and membrane targeting. This Homo sapiens (Human) protein is Glutamate receptor-interacting protein 1 (GRIP1).